Consider the following 469-residue polypeptide: Glutamine synthetase (469 aa).

Residues 15-96 (NDVKFIDVRF…INFFIHDPIT (82 aa)) enclose the GS beta-grasp domain. A GS catalytic domain is found at 104-469 (PRNIAKKAEA…PHEFELYFDI (366 aa)). E129 and E131 together coordinate Mg(2+). Position 205 (E205) interacts with ATP. Mg(2+) is bound by residues E210 and E218. 221–223 (YKF) contacts ATP. Residues 262-263 (NG) and G263 contribute to the L-glutamate site. H267 contacts Mg(2+). ATP-binding positions include 269-271 (HQS) and S271. R320, E326, and R338 together coordinate L-glutamate. ATP-binding residues include R338, R343, and K352. Residue E357 coordinates Mg(2+). R359 contributes to the L-glutamate binding site. Y397 is modified (O-AMP-tyrosine).

It belongs to the glutamine synthetase family. In terms of assembly, oligomer of 12 subunits arranged in the form of two hexagons. Mg(2+) serves as cofactor.

The protein localises to the cytoplasm. It carries out the reaction L-glutamate + NH4(+) + ATP = L-glutamine + ADP + phosphate + H(+). With respect to regulation, the activity of this enzyme could be controlled by adenylation under conditions of abundant glutamine. Its function is as follows. Catalyzes the ATP-dependent biosynthesis of glutamine from glutamate and ammonia. This Streptomyces filamentosus (Streptomyces roseosporus) protein is Glutamine synthetase.